The following is a 23-amino-acid chain: GKCGEINGSCDECYGGSVTCDCY.

The cysteines at positions 10 and 20 are disulfide-linked.

Expressed by the venom gland.

Its subcellular location is the secreted. In terms of biological role, insecticidal neurotoxin that reversibly inhibits the N-methyl-D-aspartate (NMDA)-subtype of ionotropic glutamate receptor (GRIN) and inhibits inactivation of insect sodium channels (Nav). In vivo, is highly toxic to insects. The sequence is that of U1-ctenitoxin-Co1a from Ctenus ornatus (Brazilian spider).